A 93-amino-acid chain; its full sequence is uncharacterized protein (93 aa).

It is found in the plastid. It localises to the chloroplast. This is an uncharacterized protein from Diacronema lutheri (Unicellular marine alga).